Consider the following 116-residue polypeptide: MHTSELLKHIYDINLSYLLLAQRLIVQDKASAMFRLGINEEMATTLAALTLPQMVKLAETNQLVCHFRFDSHQTITQLTQDSRVDDLQQIHTGIMLSTRLLNDVNQPEEALRKKRA.

The protein belongs to the FlhD family. In terms of assembly, homodimer; disulfide-linked. Forms a heterohexamer composed of two FlhC and four FlhD subunits. Each FlhC binds a FlhD dimer, forming a heterotrimer, and a hexamer assembles by dimerization of two heterotrimers.

The protein localises to the cytoplasm. Functionally, functions in complex with FlhC as a master transcriptional regulator that regulates transcription of several flagellar and non-flagellar operons by binding to their promoter region. Activates expression of class 2 flagellar genes, including fliA, which is a flagellum-specific sigma factor that turns on the class 3 genes. Also regulates genes whose products function in a variety of physiological pathways. The chain is Flagellar transcriptional regulator FlhD from Escherichia coli O9:H4 (strain HS).